We begin with the raw amino-acid sequence, 98 residues long: MTPVHFSFTSAFILGLMGLAFHRTHLLSALLCLEGMMLSLFIALSLWALQMEAIGYSVAPMLLLAFSACEASAGLALLVATARTHGTDRLQSLNLLQC.

Helical transmembrane passes span 1–21 (MTPVHFSFTSAFILGLMGLAF), 29–49 (ALLCLEGMMLSLFIALSLWAL), and 58–78 (VAPMLLLAFSACEASAGLALL).

It belongs to the complex I subunit 4L family.

The protein localises to the mitochondrion membrane. The catalysed reaction is a ubiquinone + NADH + 5 H(+)(in) = a ubiquinol + NAD(+) + 4 H(+)(out). In terms of biological role, core subunit of the mitochondrial membrane respiratory chain NADH dehydrogenase (Complex I) which catalyzes electron transfer from NADH through the respiratory chain, using ubiquinone as an electron acceptor. Part of the enzyme membrane arm which is embedded in the lipid bilayer and involved in proton translocation. This chain is NADH-ubiquinone oxidoreductase chain 4L (MT-ND4L), found in Salmo salar (Atlantic salmon).